We begin with the raw amino-acid sequence, 658 residues long: Transport protein particle subunit trs85-1 (658 aa).

The protein belongs to the TRS85 family. In terms of assembly, part of the multisubunit TRAPP (transport protein particle) complexes I and II.

Its subcellular location is the golgi apparatus. The protein resides in the cis-Golgi network. In terms of biological role, component of the TRAPP I and TRAPP II complexes. TRAPP I plays a key role in the late stages of endoplasmic reticulum to Golgi traffic. TRAPP II seems to play a role in intra-Golgi transport. Has a role late in meiosis following DNA replication. The sequence is that of Transport protein particle subunit trs85-1 (trs85-1) from Schizosaccharomyces pombe (strain 972 / ATCC 24843) (Fission yeast).